The primary structure comprises 249 residues: Uridylate kinase (249 aa).

Residue 23 to 26 (KISG) participates in ATP binding. Residues 31-36 (GDQGFG) are involved in allosteric activation by GTP. Residue Gly65 coordinates UMP. ATP-binding residues include Gly66 and Arg70. UMP-binding positions include Asp85 and 146 to 153 (TGNPYFTT). ATP contacts are provided by Thr173, Tyr179, and Asp182.

Belongs to the UMP kinase family. In terms of assembly, homohexamer.

Its subcellular location is the cytoplasm. The catalysed reaction is UMP + ATP = UDP + ADP. The protein operates within pyrimidine metabolism; CTP biosynthesis via de novo pathway; UDP from UMP (UMPK route): step 1/1. With respect to regulation, allosterically activated by GTP. Inhibited by UTP. Functionally, catalyzes the reversible phosphorylation of UMP to UDP. The chain is Uridylate kinase from Jannaschia sp. (strain CCS1).